We begin with the raw amino-acid sequence, 20 residues long: Cytochrome c oxidase subunit 6A1, mitochondrial (20 aa).

The protein belongs to the cytochrome c oxidase subunit 6A family. In terms of assembly, component of the cytochrome c oxidase (complex IV, CIV), a multisubunit enzyme composed of 14 subunits. The complex is composed of a catalytic core of 3 subunits MT-CO1, MT-CO2 and MT-CO3, encoded in the mitochondrial DNA, and 11 supernumerary subunits COX4I, COX5A, COX5B, COX6A, COX6B, COX6C, COX7A, COX7B, COX7C, COX8 and NDUFA4, which are encoded in the nuclear genome. The complex exists as a monomer or a dimer and forms supercomplexes (SCs) in the inner mitochondrial membrane with NADH-ubiquinone oxidoreductase (complex I, CI) and ubiquinol-cytochrome c oxidoreductase (cytochrome b-c1 complex, complex III, CIII), resulting in different assemblies (supercomplex SCI(1)III(2)IV(1) and megacomplex MCI(2)III(2)IV(2)). In terms of tissue distribution, liver specific isoform.

It is found in the mitochondrion inner membrane. It participates in energy metabolism; oxidative phosphorylation. Functionally, component of the cytochrome c oxidase, the last enzyme in the mitochondrial electron transport chain which drives oxidative phosphorylation. The respiratory chain contains 3 multisubunit complexes succinate dehydrogenase (complex II, CII), ubiquinol-cytochrome c oxidoreductase (cytochrome b-c1 complex, complex III, CIII) and cytochrome c oxidase (complex IV, CIV), that cooperate to transfer electrons derived from NADH and succinate to molecular oxygen, creating an electrochemical gradient over the inner membrane that drives transmembrane transport and the ATP synthase. Cytochrome c oxidase is the component of the respiratory chain that catalyzes the reduction of oxygen to water. Electrons originating from reduced cytochrome c in the intermembrane space (IMS) are transferred via the dinuclear copper A center (CU(A)) of subunit 2 and heme A of subunit 1 to the active site in subunit 1, a binuclear center (BNC) formed by heme A3 and copper B (CU(B)). The BNC reduces molecular oxygen to 2 water molecules unsing 4 electrons from cytochrome c in the IMS and 4 protons from the mitochondrial matrix. The sequence is that of Cytochrome c oxidase subunit 6A1, mitochondrial (COX6A1) from Canis lupus familiaris (Dog).